The sequence spans 339 residues: Phenylalanine--tRNA ligase alpha subunit (339 aa).

Glu-250 is a binding site for Mg(2+).

The protein belongs to the class-II aminoacyl-tRNA synthetase family. Phe-tRNA synthetase alpha subunit type 1 subfamily. In terms of assembly, tetramer of two alpha and two beta subunits. The cofactor is Mg(2+).

Its subcellular location is the cytoplasm. The catalysed reaction is tRNA(Phe) + L-phenylalanine + ATP = L-phenylalanyl-tRNA(Phe) + AMP + diphosphate + H(+). This chain is Phenylalanine--tRNA ligase alpha subunit, found in Bacteroides thetaiotaomicron (strain ATCC 29148 / DSM 2079 / JCM 5827 / CCUG 10774 / NCTC 10582 / VPI-5482 / E50).